Reading from the N-terminus, the 634-residue chain is Formate--tetrahydrofolate ligase (634 aa).

An ATP-binding site is contributed by 78-85 (TPLGEGKS).

It belongs to the formate--tetrahydrofolate ligase family. Homodimer.

It catalyses the reaction (6S)-5,6,7,8-tetrahydrofolate + formate + ATP = (6R)-10-formyltetrahydrofolate + ADP + phosphate. It participates in one-carbon metabolism; tetrahydrofolate interconversion. This chain is Formate--tetrahydrofolate ligase (THFS), found in Arabidopsis thaliana (Mouse-ear cress).